The following is a 362-amino-acid chain: GTP cyclohydrolase FolE2 (362 aa).

It belongs to the GTP cyclohydrolase IV family.

It carries out the reaction GTP + H2O = 7,8-dihydroneopterin 3'-triphosphate + formate + H(+). The protein operates within cofactor biosynthesis; 7,8-dihydroneopterin triphosphate biosynthesis; 7,8-dihydroneopterin triphosphate from GTP: step 1/1. Converts GTP to 7,8-dihydroneopterin triphosphate. The sequence is that of GTP cyclohydrolase FolE2 from Jannaschia sp. (strain CCS1).